Here is a 472-residue protein sequence, read N- to C-terminus: Glycogen synthase (472 aa).

Lys-16 is a binding site for ADP-alpha-D-glucose.

The protein belongs to the glycosyltransferase 1 family. Bacterial/plant glycogen synthase subfamily.

It catalyses the reaction [(1-&gt;4)-alpha-D-glucosyl](n) + ADP-alpha-D-glucose = [(1-&gt;4)-alpha-D-glucosyl](n+1) + ADP + H(+). The protein operates within glycan biosynthesis; glycogen biosynthesis. Synthesizes alpha-1,4-glucan chains using ADP-glucose. The sequence is that of Glycogen synthase from Jannaschia sp. (strain CCS1).